The sequence spans 457 residues: B-cell linker protein (457 aa).

A disordered region spans residues 36–306; the sequence is IKKLKVKGPP…FPPTQKPVHQ (271 aa). Positions 57-74 are enriched in acidic residues; sequence PADEEEQWSDDFDSDYEN. Y72, Y84, Y96, Y178, and Y189 each carry phosphotyrosine; by SYK. The segment covering 172–187 has biased composition (acidic residues); it reads LEDEADYVVPVEDNDE. The span at 207 to 218 shows a compositional bias: polar residues; the sequence is NRSTKPNSSSKH. The span at 272 to 290 shows a compositional bias: basic and acidic residues; the sequence is CEEKPVPAERHRGSSHRQD. The SH2 domain maps to 347-454; it reads WYAGACDRKS…KDSTRLKYAV (108 aa).

Associates with PLCG1, VAV1 and NCK1 in a B-cell antigen receptor-dependent fashion. Interacts with VAV3, PLCG2 and GRB2. Interacts through its SH2 domain with CD79A. Interacts (via SH2 domain) with SYK; phosphorylated and activated by SYK. Interacts (via SH2 domain) with SCIMP; this interaction is dependent on phosphorylation of SCIMP 'Tyr-120'. Post-translationally, following BCR activation, phosphorylated on tyrosine residues by SYK and LYN. When phosphorylated, serves as a scaffold to assemble downstream targets of antigen activation, including PLCG1, VAV1, GRB2 and NCK1. Phosphorylation of Tyr-84, Tyr-178 and Tyr-189 facilitates PLCG1 binding. Phosphorylation of Tyr-72 facilitates VAV1 and NCK1 binding. Phosphorylation is required for both Ca(2+) and MAPK signaling pathways. Phosphorylation of Tyr-96 is required for the binding of BTK. In terms of tissue distribution, expressed in the spleen and weakly in thymus, no expression was seen in liver, testis, or brain. Expressed in B-cell lines representing different developmental stages from the pre-B to the plasma cell stage, but not in a T-cell or a fibroblast cell line.

It localises to the cytoplasm. The protein resides in the cell membrane. Its function is as follows. Functions as a central linker protein, downstream of the B-cell receptor (BCR), bridging the SYK kinase to a multitude of signaling pathways and regulating biological outcomes of B-cell function and development. Plays a role in the activation of ERK/EPHB2, MAP kinase p38 and JNK. Modulates AP1 activation. Important for the activation of NF-kappa-B and NFAT. Plays an important role in BCR-mediated PLCG1 and PLCG2 activation and Ca(2+) mobilization and is required for trafficking of the BCR to late endosomes. However, does not seem to be required for pre-BCR-mediated activation of MAP kinase and phosphatidyl-inositol 3 (PI3) kinase signaling. May be required for the RAC1-JNK pathway. Plays a critical role in orchestrating the pro-B cell to pre-B cell transition. May play an important role in BCR-induced B-cell apoptosis. The chain is B-cell linker protein (Blnk) from Mus musculus (Mouse).